We begin with the raw amino-acid sequence, 652 residues long: MASLQISGSVKFEPFVGFNRIRHFRPIASLGFPRFRRRFSIGRSLLLRRSSSFSGDSRESDEERFITDAERDGSGSVLGFQLTPPGDQQTVSTSTGEITHHEEKKEAIDQIVMADFGVPGNRAVEEGAAEVGIPSGKAEVVNNLVFVTSEAAPYSKTGGLGDVCGSLPIALAGRGHRVMVISPRYLNGTAADKNYARAKDLGIRVTVNCFGGSQEVSFYHEYRDGVDWVFVDHKSYHRPGNPYGDSKGAFGDNQFRFTLLCHAACEAPLVLPLGGFTYGEKSLFLVNDWHAGLVPILLAAKYRPYGVYKDARSILIIHNLAHQGVEPAATYTNLGLPSEWYGAVGWVFPTWARTHALDTGEAVNVLKGAIVTSDRIITVSQGYAWEITTVEGGYGLQDLLSSRKSVINGITNGINVDEWNPSTDEHIPFHYSADDVSEKIKCKMALQKELGLPIRPECPMIGFIGRLDYQKGIDLIQTAGPDLMVDDIQFVMLGSGDPKYESWMRSMEETYRDKFRGWVGFNVPISHRITAGCDILLMPSRFEPCGLNQLYAMRYGTIPVVHGTGGLRDTVENFNPYAEGGAGTGTGWVFTPLSKDSMVSALRLAAATYREYKQSWEGLMRRGMTRNYSWENAAVQYEQVFQWVFMDPPYVS.

The N-terminal 49 residues, 1-49 (MASLQISGSVKFEPFVGFNRIRHFRPIASLGFPRFRRRFSIGRSLLLRR), are a transit peptide targeting the chloroplast. ADP-alpha-D-glucose is bound at residue Lys156.

Belongs to the glycosyltransferase 1 family. Bacterial/plant glycogen synthase subfamily. As to expression, expressed in roots, leaves, stems, buds and flowers.

The protein resides in the plastid. The protein localises to the chloroplast. It localises to the amyloplast. The enzyme catalyses [(1-&gt;4)-alpha-D-glucosyl](n) + ADP-alpha-D-glucose = [(1-&gt;4)-alpha-D-glucosyl](n+1) + ADP + H(+). Its pathway is glycan biosynthesis; starch biosynthesis. In terms of biological role, involved in the synthesis of short glycan chains within amylopectin in leaves. Is required to generate chains up to about a degree of polymerization of 10 (DP10). This chain is Starch synthase 1, chloroplastic/amyloplastic (SS1), found in Arabidopsis thaliana (Mouse-ear cress).